Reading from the N-terminus, the 282-residue chain is MSEQTVYGAASDQPTPKPRVKVRTTHLQKWKAEGHKWAMLTAYDFSTARAFDDAGIPVLLVGDSAANVVYGYDTTVPITIDELIPLVRGVVRGAPHALVVADLPFGSYEEGPRQALATATRFLKETGAHAVKLEGGERVAEQIATLSAAGIPVMAHIGFTPQSVNGLGGFKVQGRGDAAEQTIHDAIAVQEAGAFSVVMEMVPAELATQITGKLTIPTVGIGAGPNCDAQVLVWQDMAGLTSGRTAKFVKRFGDVGAELRRAASQYADEVAAGVFPAEEHSF.

Mg(2+) is bound by residues Asp63 and Asp102. Residues 63-64 (DS), Asp102, and Lys132 each bind 3-methyl-2-oxobutanoate. Glu134 contributes to the Mg(2+) binding site. The active-site Proton acceptor is the Glu200.

It belongs to the PanB family. Homodecamer; pentamer of dimers. Mg(2+) is required as a cofactor.

It localises to the cytoplasm. The catalysed reaction is 3-methyl-2-oxobutanoate + (6R)-5,10-methylene-5,6,7,8-tetrahydrofolate + H2O = 2-dehydropantoate + (6S)-5,6,7,8-tetrahydrofolate. It functions in the pathway cofactor biosynthesis; (R)-pantothenate biosynthesis; (R)-pantoate from 3-methyl-2-oxobutanoate: step 1/2. In terms of biological role, catalyzes the reversible reaction in which hydroxymethyl group from 5,10-methylenetetrahydrofolate is transferred onto alpha-ketoisovalerate to form ketopantoate. The protein is 3-methyl-2-oxobutanoate hydroxymethyltransferase of Mycobacterium sp. (strain JLS).